The chain runs to 364 residues: Protein leg1b (364 aa).

The signal sequence occupies residues 1–22 (MSEMGFLRSVAAVLLLAVFSHA). N-linked (GlcNAc...) asparagine glycosylation is present at Asn70.

Belongs to the LEG1 family. In terms of tissue distribution, detected in all tissues tested, with the highest levels in serum (at protein level). At mRNA level, only expressed in liver.

The protein localises to the secreted. Involved in early development of liver, exocrine pancreas and intestine, probably through cell cycle regulation. In liver, its function is partially redundant with leg1a function. This chain is Protein leg1b, found in Danio rerio (Zebrafish).